We begin with the raw amino-acid sequence, 611 residues long: Actin-interacting protein 1 (611 aa).

WD repeat units follow at residues 57–96, 145–185, 188–227, 237–276, 322–361, 446–485, 489–528, 534–573, and 579–610; these read EHSH…HILK, GQAR…FKST, EHTK…KTGV, AHSG…VEKT, GHNK…SNRV, PISY…VSEV, VHPA…ELAH, FHTA…DHPI, and HAMS…WNVP.

The protein belongs to the WD repeat AIP1 family.

Its subcellular location is the cytoplasm. The protein resides in the cytoskeleton. Functionally, induces disassembly of actin filaments in conjunction with ADF/cofilin family proteins. Regulator of actin organization in myofibrils. The polypeptide is Actin-interacting protein 1 (unc-78) (Caenorhabditis elegans).